A 272-amino-acid polypeptide reads, in one-letter code: Phosphatidylglycerol--prolipoprotein diacylglyceryl transferase (272 aa).

4 helical membrane-spanning segments follow: residues 16 to 36, 62 to 82, 97 to 117, and 129 to 149; these read VGLH…LSSF, FALG…VLFY, IWKG…WAAV, and LSVT…ALLI. R150 lines the a 1,2-diacyl-sn-glycero-3-phospho-(1'-sn-glycerol) pocket. A run of 2 helical transmembrane segments spans residues 206 to 226 and 246 to 266; these read GVIR…VAVI and ILTI…GIIW.

It belongs to the Lgt family.

Its subcellular location is the cell inner membrane. The catalysed reaction is L-cysteinyl-[prolipoprotein] + a 1,2-diacyl-sn-glycero-3-phospho-(1'-sn-glycerol) = an S-1,2-diacyl-sn-glyceryl-L-cysteinyl-[prolipoprotein] + sn-glycerol 1-phosphate + H(+). It functions in the pathway protein modification; lipoprotein biosynthesis (diacylglyceryl transfer). Its function is as follows. Catalyzes the transfer of the diacylglyceryl group from phosphatidylglycerol to the sulfhydryl group of the N-terminal cysteine of a prolipoprotein, the first step in the formation of mature lipoproteins. The chain is Phosphatidylglycerol--prolipoprotein diacylglyceryl transferase from Chlamydia trachomatis serovar D (strain ATCC VR-885 / DSM 19411 / UW-3/Cx).